A 744-amino-acid polypeptide reads, in one-letter code: Glucosamine inositolphosphorylceramide transferase 1 (744 aa).

A run of 3 helical transmembrane segments spans residues Phe31–Val51, Ser378–Val398, and Leu460–Leu480. Substrate is bound by residues Asn534, Asn558 to Arg563, Asp579 to Asp581, Arg609, and Phe665 to Asp669. Asp581 contributes to the Mn(2+) binding site. A disulfide bridge connects residues Cys667 and Cys718. The active site involves Asp669.

The protein belongs to the glycosyltransferase 64 family. Requires Mn(2+) as cofactor. In terms of tissue distribution, highly expressed in almost all tissues.

It is found in the membrane. Its pathway is sphingolipid metabolism. Functionally, essential protein. Glycosyltransferase that mediates the glycosylation of glycosylinositol phosphorylceramides (GIPCs), the major sphingolipids in the plasma membrane; acts as a HexN(Ac)-specific GIPC sugar transferase. Responsible for the glycosylation of a subgroup of GIPCs found in seeds and pollen that contain GlcNAc and GlcN (GlcN(Ac)). Maybe involved in the maintenance of cell-cell adhesion. The chain is Glucosamine inositolphosphorylceramide transferase 1 from Oryza sativa subsp. japonica (Rice).